The primary structure comprises 277 residues: Transcription factor WRKY19 (277 aa).

The segment at residues 100–168 is a DNA-binding region (WRKY); it reads QDTASLDDGL…YLGDHTCGQA (69 aa).

The protein belongs to the WRKY group III family.

It localises to the nucleus. In terms of biological role, may play a role in defense responses. The chain is Transcription factor WRKY19 from Oryza sativa subsp. japonica (Rice).